The chain runs to 780 residues: Acetyl-CoA decarbonylase/synthase complex subunit alpha (780 aa).

[4Fe-4S] cluster-binding residues include Cys-73, Cys-76, Cys-77, Cys-79, Cys-84, and Cys-93. CO is bound at residue His-116. The [Ni-4Fe-4S] cluster site is built by His-250, Cys-278, and Cys-317. 2 4Fe-4S ferredoxin-type domains span residues Ile-399–Val-429 and Leu-440–Val-469. [4Fe-4S] cluster-binding residues include Cys-409, Cys-412, Cys-415, Cys-419, Cys-449, Cys-452, Cys-455, and Cys-459. Residues Cys-517, Cys-546, and Cys-581 each coordinate [Ni-4Fe-4S] cluster.

Belongs to the Ni-containing carbon monoxide dehydrogenase family. As to quaternary structure, heterotetramer of two alpha and two epsilon subunits. The ACDS complex is made up of alpha, epsilon, beta, gamma and delta subunits with a probable stoichiometry of (alpha(2)epsilon(2))(4)-beta(8)-(gamma(1)delta(1))(8). It depends on [4Fe-4S] cluster as a cofactor. Requires [Ni-4Fe-4S] cluster as cofactor.

It carries out the reaction CO + 2 oxidized [2Fe-2S]-[ferredoxin] + H2O = 2 reduced [2Fe-2S]-[ferredoxin] + CO2 + 2 H(+). In terms of biological role, part of the ACDS complex that catalyzes the reversible cleavage of acetyl-CoA, allowing autotrophic growth from CO(2). The alpha-epsilon subcomponent functions as a carbon monoxide dehydrogenase. In Methanothermobacter thermautotrophicus (strain ATCC 29096 / DSM 1053 / JCM 10044 / NBRC 100330 / Delta H) (Methanobacterium thermoautotrophicum), this protein is Acetyl-CoA decarbonylase/synthase complex subunit alpha.